We begin with the raw amino-acid sequence, 407 residues long: 4-hydroxybenzoate polyprenyltransferase, mitochondrial (407 aa).

Residues 1-20 (MAFFGLSRVSRRLLKSSVSV) constitute a mitochondrion transit peptide. The next 6 membrane-spanning stretches (helical) occupy residues 137–157 (IGTWLLAWPCMWSIALAADPG), 162–182 (FKYMALFGCGALLLRGAGCTI), 210–230 (FQGIGFLGLQLLLGLGILLQL), 254–274 (FTFWPQAFLGLTINWGALLGW), 279–299 (GSIAPSIVLPLYLSGVCWTLV), and 330–350 (LWLTGFGTASIGFLALSGFSA).

This sequence belongs to the UbiA prenyltransferase family. Mg(2+) serves as cofactor. As to expression, expressed in flowers.

It is found in the mitochondrion inner membrane. It carries out the reaction an all-trans-polyprenyl diphosphate + 4-hydroxybenzoate = a 4-hydroxy-3-(all-trans-polyprenyl)benzoate + diphosphate. Its pathway is cofactor biosynthesis; ubiquinone biosynthesis. Functionally, catalyzes the prenylation of para-hydroxybenzoate (PHB) with an all-trans polyprenyl group. Mediates the second step in the final reaction sequence of coenzyme Q (CoQ) biosynthesis, which is the condensation of the polyisoprenoid side chain with PHB, generating the first membrane-bound Q intermediate. Required for embryo development. The chain is 4-hydroxybenzoate polyprenyltransferase, mitochondrial from Arabidopsis thaliana (Mouse-ear cress).